Here is a 114-residue protein sequence, read N- to C-terminus: Large ribosomal subunit protein bL20 (114 aa).

Belongs to the bacterial ribosomal protein bL20 family.

Its function is as follows. Binds directly to 23S ribosomal RNA and is necessary for the in vitro assembly process of the 50S ribosomal subunit. It is not involved in the protein synthesizing functions of that subunit. This Amoebophilus asiaticus (strain 5a2) protein is Large ribosomal subunit protein bL20.